Reading from the N-terminus, the 262-residue chain is Expansin-A7 (262 aa).

Positions methionine 1–glycine 30 are cleaved as a signal peptide. One can recognise an Expansin-like EG45 domain in the interval glycine 55–glycine 167. 3 cysteine pairs are disulfide-bonded: cysteine 58–cysteine 86, cysteine 89–cysteine 162, and cysteine 94–cysteine 100. The 81-residue stretch at tyrosine 177–serine 257 folds into the Expansin-like CBD domain.

This sequence belongs to the expansin family. Expansin A subfamily.

It localises to the secreted. The protein resides in the cell wall. Its subcellular location is the membrane. Causes loosening and extension of plant cell walls by disrupting non-covalent bonding between cellulose microfibrils and matrix glucans. No enzymatic activity has been found. This chain is Expansin-A7 (EXPA7), found in Arabidopsis thaliana (Mouse-ear cress).